The sequence spans 171 residues: 3-hydroxydecanoyl-[acyl-carrier-protein] dehydratase (171 aa).

His70 is a catalytic residue.

It belongs to the thioester dehydratase family. FabA subfamily. In terms of assembly, homodimer.

The protein resides in the cytoplasm. It carries out the reaction a (3R)-hydroxyacyl-[ACP] = a (2E)-enoyl-[ACP] + H2O. It catalyses the reaction (3R)-hydroxydecanoyl-[ACP] = (2E)-decenoyl-[ACP] + H2O. The enzyme catalyses (2E)-decenoyl-[ACP] = (3Z)-decenoyl-[ACP]. It functions in the pathway lipid metabolism; fatty acid biosynthesis. In terms of biological role, necessary for the introduction of cis unsaturation into fatty acids. Catalyzes the dehydration of (3R)-3-hydroxydecanoyl-ACP to E-(2)-decenoyl-ACP and then its isomerization to Z-(3)-decenoyl-ACP. Can catalyze the dehydratase reaction for beta-hydroxyacyl-ACPs with saturated chain lengths up to 16:0, being most active on intermediate chain length. The protein is 3-hydroxydecanoyl-[acyl-carrier-protein] dehydratase of Pseudomonas syringae pv. syringae (strain B728a).